The sequence spans 204 residues: Leucyl/phenylalanyl-tRNA--protein transferase (204 aa).

This sequence belongs to the L/F-transferase family.

Its subcellular location is the cytoplasm. It catalyses the reaction N-terminal L-lysyl-[protein] + L-leucyl-tRNA(Leu) = N-terminal L-leucyl-L-lysyl-[protein] + tRNA(Leu) + H(+). The enzyme catalyses N-terminal L-arginyl-[protein] + L-leucyl-tRNA(Leu) = N-terminal L-leucyl-L-arginyl-[protein] + tRNA(Leu) + H(+). It carries out the reaction L-phenylalanyl-tRNA(Phe) + an N-terminal L-alpha-aminoacyl-[protein] = an N-terminal L-phenylalanyl-L-alpha-aminoacyl-[protein] + tRNA(Phe). Functionally, functions in the N-end rule pathway of protein degradation where it conjugates Leu, Phe and, less efficiently, Met from aminoacyl-tRNAs to the N-termini of proteins containing an N-terminal arginine or lysine. This chain is Leucyl/phenylalanyl-tRNA--protein transferase, found in Rhizobium johnstonii (strain DSM 114642 / LMG 32736 / 3841) (Rhizobium leguminosarum bv. viciae).